The chain runs to 239 residues: Transcriptional regulatory protein DcuR (239 aa).

Residues 3–121 enclose the Response regulatory domain; sequence NVLIIDDDAM…RFEEALTGWR (119 aa). At D56 the chain carries 4-aspartylphosphate. The H-T-H motif DNA-binding region spans 181–200; that stretch reads TDELANEVNISRVSCRKYLI.

In terms of processing, phosphorylated and activated by DcuS.

It is found in the cytoplasm. Functionally, member of the two-component regulatory system DcuR/DcuS. Involved in the C4-dicarboxylate-stimulated regulation of the genes encoding the anaerobic fumarate respiratory system (frdABCD; nuoAN; dcuB; dcuC; sdhCDAB; etc.). Weakly regulates the aerobic C4-dicarboxylate transporter dctA. This Escherichia coli O157:H7 protein is Transcriptional regulatory protein DcuR (dcuR).